The primary structure comprises 843 residues: Protein P (843 aa).

A terminal protein domain (TP) region spans residues 1 to 177 (MPLSYQHFRK…FCGSPYSWEQ (177 aa)). The tract at residues 178-346 (DLQHGRLVFQ…YCLYHIVNLI (169 aa)) is spacer. The interval 219–250 (RKSRLGPQPAQGQLAGRQQGGSGSIRARVHPS) is disordered. The span at 223 to 235 (LGPQPAQGQLAGR) shows a compositional bias: low complexity. Residues 347–690 (EDWGPCTEHG…YLNLYPVARQ (344 aa)) are polymerase/reverse transcriptase domain (RT). The 244-residue stretch at 357-600 (EHRIRTPRTP…YSLNFMGYVI (244 aa)) folds into the Reverse transcriptase domain. Mg(2+)-binding residues include D429, D551, and D552.

This sequence belongs to the hepadnaviridae P protein family.

The enzyme catalyses DNA(n) + a 2'-deoxyribonucleoside 5'-triphosphate = DNA(n+1) + diphosphate. It catalyses the reaction Endonucleolytic cleavage to 5'-phosphomonoester.. With respect to regulation, activated by host HSP70 and HSP40 in vitro to be able to bind the epsilon loop of the pgRNA. Because deletion of the RNase H region renders the protein partly chaperone-independent, the chaperones may be needed indirectly to relieve occlusion of the RNA-binding site by this domain. Inhibited by several reverse-transcriptase inhibitors: Lamivudine, Adefovir and Entecavir. Its function is as follows. Multifunctional enzyme that converts the viral RNA genome into dsDNA in viral cytoplasmic capsids. This enzyme displays a DNA polymerase activity that can copy either DNA or RNA templates, and a ribonuclease H (RNase H) activity that cleaves the RNA strand of RNA-DNA heteroduplexes in a partially processive 3'- to 5'-endonucleasic mode. Neo-synthesized pregenomic RNA (pgRNA) are encapsidated together with the P protein, and reverse-transcribed inside the nucleocapsid. Initiation of reverse-transcription occurs first by binding the epsilon loop on the pgRNA genome, and is initiated by protein priming, thereby the 5'-end of (-)DNA is covalently linked to P protein. Partial (+)DNA is synthesized from the (-)DNA template and generates the relaxed circular DNA (RC-DNA) genome. After budding and infection, the RC-DNA migrates in the nucleus, and is converted into a plasmid-like covalently closed circular DNA (cccDNA). The activity of P protein does not seem to be necessary for cccDNA generation, and is presumably released from (+)DNA by host nuclear DNA repair machinery. The chain is Protein P from Hepatitis B virus genotype B2 (isolate Vietnam/16091/1992) (HBV-B).